Here is a 127-residue protein sequence, read N- to C-terminus: Fluoride-specific ion channel FluC (127 aa).

4 helical membrane passes run 4 to 24 (SILAIALGAALGALLRWFLGL), 36 to 56 (GTLLANLVGGYVIGAAIAYFA), 68 to 88 (LIITGFCGGLTTFSTFSAEVV), and 99 to 119 (AAGAIATHVSGSLLMTLLGLF). Residues Gly75 and Thr78 each coordinate Na(+).

This sequence belongs to the fluoride channel Fluc/FEX (TC 1.A.43) family.

It is found in the cell inner membrane. The catalysed reaction is fluoride(in) = fluoride(out). Na(+) is not transported, but it plays an essential structural role and its presence is essential for fluoride channel function. Functionally, fluoride-specific ion channel. Important for reducing fluoride concentration in the cell, thus reducing its toxicity. In Pseudomonas aeruginosa (strain UCBPP-PA14), this protein is Fluoride-specific ion channel FluC.